A 1816-amino-acid polypeptide reads, in one-letter code: Kinesin-like protein KIF1B (1816 aa).

Serine 2 carries the N-acetylserine modification. Residues 5-354 (SVKVAVRVRP…LRYADRAKQI (350 aa)) form the Kinesin motor domain. Position 97–104 (97–104 (GQTGAGKS)) interacts with ATP. Residues 270–350 (NINKSLTTLG…TLSTLRYADR (81 aa)) form an interaction with KIFBP region. Residues 365–386 (NAKLVRELKEEVTRLKDLLRAQ) are a coiled coil. Residues 431–450 (FSTASMGSLTSSPSSCSLSS) form a disordered region. The span at 432-450 (STASMGSLTSSPSSCSLSS) shows a compositional bias: low complexity. Positions 470–502 (GEEAIERLKESEKIIAELNETWEEKLRKTEAIR) form a coiled coil. Positions 556–612 (TRVGQADAERRQDIVLSGAHIKEEHCIFRSERSNSGEVIVTLEPCERSETYVNGKRV) constitute an FHA domain. 2 positions are modified to phosphothreonine: threonine 647 and threonine 652. Phosphoserine is present on residues glutamine 663 and glutamate 665. 2 coiled-coil regions span residues 668–737 (EKQG…EEEV) and 841–869 (SLEK…AQDE). Phosphoserine occurs at positions 1054 and 1057. Threonine 1075 carries the post-translational modification Phosphothreonine. Phosphoserine is present on residues asparagine 1141, serine 1416, serine 1454, and serine 1487. Residues 1550-1570 (STTTFESAITPSESSGYDSGD) are disordered. A compositionally biased stretch (polar residues) spans 1554 to 1566 (FESAITPSESSGY). Serine 1573, serine 1603, serine 1610, and serine 1613 each carry phosphoserine. Residues 1617–1660 (RDPSESSFSSATLTPSSTCPSLVDSRSNSLDQKTPEANSRASSP) are disordered. Over residues 1621-1634 (ESSFSSATLTPSST) the composition is skewed to low complexity. A compositionally biased stretch (polar residues) spans 1640–1658 (DSRSNSLDQKTPEANSRAS). The 98-residue stretch at 1702-1799 (VSKKGYLHFK…WLYAFNPLLA (98 aa)) folds into the PH domain.

It belongs to the TRAFAC class myosin-kinesin ATPase superfamily. Kinesin family. Unc-104 subfamily. In terms of assembly, monomer. Interacts with KIFBP; positively regulates KIF1B microtubule motor activity. Interacts (via C-terminus end of the kinesin-motor domain) with CHP1; the interaction occurs in a calcium-dependent manner. As to quaternary structure, interacts with MADD (via death domain); links this isoform to Rab3-carrying vesicles in anterograde synaptic vesicle transport. In terms of tissue distribution, isoform 3 is abundant in the skeletal muscle. It is also expressed in fetal brain, lung and kidney, and adult heart, placenta, testis, ovary and small intestine. Isoform 2 is abundant in the brain and also expressed in fetal heart, lung, liver and kidney, and adult skeletal muscle, placenta, liver, kidney, heart, spleen, thymus, prostate, testis, ovary, small intestine, colon and pancreas.

The protein localises to the cytoplasm. The protein resides in the cytoskeleton. It localises to the cytoplasmic vesicle. It is found in the secretory vesicle. Its subcellular location is the synaptic vesicle membrane. The protein localises to the mitochondrion. It catalyses the reaction ATP + H2O + a kinesin associated with a microtubule at position (n) = ADP + phosphate a kinesin associated with a microtubule at position (n+1, toward the plus end).. In terms of biological role, has a plus-end-directed microtubule motor activity and functions as a motor for transport of vesicles and organelles along microtubules. Functionally, has a plus-end-directed microtubule motor activity and functions as a motor for anterograde synaptic vesicle transport along axonal microtubules from the cell body to the presynapse in neuronal cells. Functions as a downstream effector in a developmental apoptotic pathway that is activated when nerve growth factor (NGF) becomes limiting for neuronal progenitor cells. Its function is as follows. Has a plus-end-directed microtubule motor activity and functions as a motor for anterograde transport of mitochondria. This is Kinesin-like protein KIF1B from Homo sapiens (Human).